We begin with the raw amino-acid sequence, 155 residues long: Endoribonuclease YbeY (155 aa).

Positions 113, 117, and 123 each coordinate Zn(2+).

It belongs to the endoribonuclease YbeY family. Zn(2+) serves as cofactor.

Its subcellular location is the cytoplasm. Functionally, single strand-specific metallo-endoribonuclease involved in late-stage 70S ribosome quality control and in maturation of the 3' terminus of the 16S rRNA. This Ureaplasma parvum serovar 3 (strain ATCC 27815 / 27 / NCTC 11736) protein is Endoribonuclease YbeY.